Reading from the N-terminus, the 414-residue chain is Probable serine/threonine-protein kinase PBL26 (414 aa).

A lipid anchor (S-palmitoyl cysteine) is attached at C3. A compositionally biased stretch (basic and acidic residues) spans 17 to 41 (RDSDNSYRRNGEVTGRDNNKTHPEN). The disordered stretch occupies residues 17–55 (RDSDNSYRRNGEVTGRDNNKTHPENPKTVNEQNKNNDED). One can recognise a Protein kinase domain in the interval 79 to 356 (FRQECLIGEG…SDVVTALGFL (278 aa)). ATP contacts are provided by residues 85–93 (IGEGGFGRV) and K108. Position 153 is a phosphotyrosine (Y153). D206 functions as the Proton acceptor in the catalytic mechanism. S240 is modified (phosphoserine). At T246 the chain carries Phosphothreonine. Residue Y254 is modified to Phosphotyrosine. The disordered stretch occupies residues 364-394 (ISVPHYDDPPQPSDETSVEDSVAAEERERAV).

The protein belongs to the protein kinase superfamily. Ser/Thr protein kinase family. Post-translationally, palmitoylation at Cys-3 and Cys-6 are required for plasma membrane location.

Its subcellular location is the cell membrane. The enzyme catalyses L-seryl-[protein] + ATP = O-phospho-L-seryl-[protein] + ADP + H(+). It carries out the reaction L-threonyl-[protein] + ATP = O-phospho-L-threonyl-[protein] + ADP + H(+). Functionally, may be involved in plant defense signaling. The protein is Probable serine/threonine-protein kinase PBL26 of Arabidopsis thaliana (Mouse-ear cress).